A 224-amino-acid polypeptide reads, in one-letter code: MSRKIEGFLLLLLFGYEATLGLSSTEDEGEDPWYQKACKCDCQGGPNALWSAGATSLDCIPECPYHKPLGFESGEVTPDQITCSNPEQYVGWYSSWTANKARLNSQGFGCAWLSKFQDSSQWLQIDLKEIKVISGILTQGRCDIDEWMTKYSVQYRTDERLNWIYYKDQTGNNRVFYGNSDRTSTVQNLLRPPIISRFIRLIPLGWHVRIAIRMELLECVSKCA.

The N-terminal stretch at 1–23 (MSRKIEGFLLLLLFGYEATLGLS) is a signal peptide. Positions 63-219 (CPYHKPLGFE…IAIRMELLEC (157 aa)) constitute an F5/8 type C domain. Cystine bridges form between cysteine 63–cysteine 219 and cysteine 110–cysteine 142.

Homooctamer of 4 homodimers; disulfide-linked. The homooctamer has a flat, cogwheel structure with a diameter of about 14 nm. Two stacked octamers can assemble to form a hexadecamer. As to expression, restricted to the retina (at protein level). Detected in the inner segment of the photoreceptors, the inner nuclear layer, the inner plexiform layer and the ganglion cell layer (at protein level). At the macula, expressed in both the outer and inner nuclear layers and in the inner plexiform layer (at protein level). Detected in retina. Detected only within the photoreceptor cell layer, most prominently within the inner segments of the photoreceptors. Undetectable in the inner plexiform layers and the inner nuclear layer.

The protein localises to the secreted. The protein resides in the cell membrane. Its function is as follows. Binds negatively charged membrane lipids, such as phosphatidylserine and phosphoinositides. May play a role in cell-cell adhesion processes in the retina, via homomeric interaction between octamers present on the surface of two neighboring cells. Required for normal structure and function of the retina. This is Retinoschisin (RS1) from Homo sapiens (Human).